A 398-amino-acid polypeptide reads, in one-letter code: Selection and upkeep of intraepithelial T-cells protein 8 (398 aa).

Residues 1 to 25 (MMKPEFSHFFGFCVYFLFLQVMASS) form the signal peptide. The 116-residue stretch at 26–141 (EKLRVTTPTR…DVAIMNLNVT (116 aa)) folds into the Ig-like V-type domain. Topologically, residues 26 to 244 (EKLRVTTPTR…ANELFNQDYL (219 aa)) are extracellular. Residues cysteine 49 and cysteine 123 are joined by a disulfide bond. N-linked (GlcNAc...) asparagine glycans are attached at residues asparagine 92 and asparagine 139. The region spanning 142 to 233 (AVGLETEIHV…TGEEKQTSII (92 aa)) is the Ig-like C1-type domain. Cysteine 163 and cysteine 217 form a disulfide bridge. A helical transmembrane segment spans residues 245 to 265 (WVGIFPFSVLSLILFGVLPFI). The Cytoplasmic segment spans residues 266–288 (NSFFRSQGCASGCLSKCLPVVTS). The chain crosses the membrane as a helical span at residues 289–309 (WPVQIVHFLVCSGVLFAVYLP). Topologically, residues 310–331 (HRYRVSLSDPQFPLYNNWITEL) are extracellular. The helical transmembrane segment at 332 to 352 (LIVILFLTICFVLPITVLLLI) threads the bilayer. Residues 353–398 (KLSPTCLAKWEKNKDDIMDSQLGLGKAREASTLYEEQSRKSWEQEK) are Cytoplasmic-facing.

The protein belongs to the SKINT family. Expressed in skin, thymus, testis and, to a lower extent, bladder, brain, heart, kidney, mammary gland, small intestine and uterus.

Its subcellular location is the membrane. Its function is as follows. May act by engaging a cell surface molecule on immature T-cells in the embryonic thymus. The chain is Selection and upkeep of intraepithelial T-cells protein 8 (Skint8) from Mus musculus (Mouse).